Here is a 210-residue protein sequence, read N- to C-terminus: 23 kDa jasmonate-induced protein (210 aa).

It belongs to the jasmonate-induced protein family.

This chain is 23 kDa jasmonate-induced protein, found in Hordeum vulgare (Barley).